Reading from the N-terminus, the 76-residue chain is Signal recognition particle 9 kDa protein (76 aa).

Belongs to the SRP9 family. In terms of assembly, heterodimer with SRP14; binds RNA as heterodimer. Component of a signal recognition particle complex that consists of a 7SL RNA molecule of 300 nucleotides and six protein subunits: srpa-72, srpa-68, SRP54, F37F2.2/SRP19, F25G6.8/SRP14 and ZK512.4/SRP9.

It localises to the cytoplasm. Functionally, component of the signal recognition particle (SRP) complex, a ribonucleoprotein complex that mediates the cotranslational targeting of secretory and membrane proteins to the endoplasmic reticulum (ER). SRP9 together with SRP14 and the Alu portion of the SRP RNA, constitutes the elongation arrest domain of SRP. The complex of SRP9 and SRP14 is required for SRP RNA binding. The protein is Signal recognition particle 9 kDa protein of Caenorhabditis elegans.